Reading from the N-terminus, the 419-residue chain is Diaminopimelate decarboxylase (419 aa).

Lys-56 carries the N6-(pyridoxal phosphate)lysine modification. Pyridoxal 5'-phosphate contacts are provided by residues Gly-234 and 274–277 (EPGR). Substrate contacts are provided by Arg-277, Arg-312, and Tyr-316. Cys-343 acts as the Proton donor in catalysis. Residues Glu-344 and Tyr-372 each coordinate substrate. Tyr-372 lines the pyridoxal 5'-phosphate pocket.

It belongs to the Orn/Lys/Arg decarboxylase class-II family. LysA subfamily. In terms of assembly, homodimer. Pyridoxal 5'-phosphate is required as a cofactor.

It catalyses the reaction meso-2,6-diaminopimelate + H(+) = L-lysine + CO2. Its pathway is amino-acid biosynthesis; L-lysine biosynthesis via DAP pathway; L-lysine from DL-2,6-diaminopimelate: step 1/1. Its function is as follows. Specifically catalyzes the decarboxylation of meso-diaminopimelate (meso-DAP) to L-lysine. This Archaeoglobus fulgidus (strain ATCC 49558 / DSM 4304 / JCM 9628 / NBRC 100126 / VC-16) protein is Diaminopimelate decarboxylase.